We begin with the raw amino-acid sequence, 379 residues long: Queuine tRNA-ribosyltransferase (379 aa).

The active-site Proton acceptor is the aspartate 95. Substrate-binding positions include 95-99 (DSGGF), aspartate 149, glutamine 197, and glycine 224. Positions 255-261 (GVGMPAE) are RNA binding. Aspartate 274 acts as the Nucleophile in catalysis. Positions 312, 314, 317, and 343 each coordinate Zn(2+).

This sequence belongs to the queuine tRNA-ribosyltransferase family. Homodimer. Within each dimer, one monomer is responsible for RNA recognition and catalysis, while the other monomer binds to the replacement base PreQ1. The cofactor is Zn(2+).

It catalyses the reaction 7-aminomethyl-7-carbaguanine + guanosine(34) in tRNA = 7-aminomethyl-7-carbaguanosine(34) in tRNA + guanine. It participates in tRNA modification; tRNA-queuosine biosynthesis. Catalyzes the base-exchange of a guanine (G) residue with the queuine precursor 7-aminomethyl-7-deazaguanine (PreQ1) at position 34 (anticodon wobble position) in tRNAs with GU(N) anticodons (tRNA-Asp, -Asn, -His and -Tyr). Catalysis occurs through a double-displacement mechanism. The nucleophile active site attacks the C1' of nucleotide 34 to detach the guanine base from the RNA, forming a covalent enzyme-RNA intermediate. The proton acceptor active site deprotonates the incoming PreQ1, allowing a nucleophilic attack on the C1' of the ribose to form the product. After dissociation, two additional enzymatic reactions on the tRNA convert PreQ1 to queuine (Q), resulting in the hypermodified nucleoside queuosine (7-(((4,5-cis-dihydroxy-2-cyclopenten-1-yl)amino)methyl)-7-deazaguanosine). The sequence is that of Queuine tRNA-ribosyltransferase from Solibacter usitatus (strain Ellin6076).